Consider the following 379-residue polypeptide: GPN-loop GTPase QQT2 (379 aa).

N-acetylmethionine is present on Met1. Position 51–56 (51–56 (GSGKTS)) interacts with GTP. Residues 108-110 (GPN) carry the Gly-Pro-Asn (GPN)-loop; involved in dimer interface motif. GTP contacts are provided by residues 211–214 (NKTD) and Ala267. The stretch at 288–322 (METYKADLDMRKADKERLEEERKKHEMEKLRKDME) forms a coiled coil. 2 stretches are compositionally biased toward basic and acidic residues: residues 303-322 (ERLE…KDME) and 335-346 (LKDRDATEKMML). The disordered stretch occupies residues 303-379 (ERLEEERKKH…EDDETKHYYL (77 aa)). Positions 347-372 (EEDDEDFQVEDEEDSDDAIDEDDEDD) are enriched in acidic residues.

It belongs to the GPN-loop GTPase family. In terms of assembly, heterodimer with QQT1. In terms of tissue distribution, expressed in individual cells of roots, leaves and flowers.

It localises to the cytoplasm. The protein resides in the nucleus. It is found in the cytoskeleton. The protein localises to the spindle. Its subcellular location is the phragmoplast. Its function is as follows. Small GTPase that is essential for the correct formation of the tangential divisions in early embryos. Associates with microtubule during mitosis and may function in the positioning of the division plane. May participate in the patterning of the early embryo at the octant-dermatogen transition. This chain is GPN-loop GTPase QQT2, found in Arabidopsis thaliana (Mouse-ear cress).